The sequence spans 349 residues: Septin-2 (349 aa).

A Septin-type G domain is found at 33-305; it reads KGFEFTLMVV…ENFRSERLKR (273 aa). The G1 motif stretch occupies residues 43–50; the sequence is GESGLGKS. Residues 43-50, Thr77, Gly103, 182-190, Gly240, and Arg255 contribute to the GTP site; these read GESGLGKS and KADTLTLKE. A G3 motif region spans residues 100–103; sequence DTPG. The interval 181 to 184 is G4 motif; the sequence is AKAD. Positions 259 to 269 are important for dimerization; sequence WGVVEVENPEH.

It belongs to the TRAFAC class TrmE-Era-EngA-EngB-Septin-like GTPase superfamily. Septin GTPase family. In terms of assembly, septins polymerize into heterooligomeric protein complexes that form filaments, and associate with cellular membranes, actin filaments and microtubules. GTPase activity is required for filament formation. Can form heterooligomers with other family members and form filaments.

Its subcellular location is the cytoplasm. It is found in the cytoskeleton. The protein resides in the spindle. It localises to the cleavage furrow. The protein localises to the midbody. Its subcellular location is the cell cortex. It is found in the cell projection. The protein resides in the cilium membrane. In terms of biological role, filament-forming cytoskeletal GTPase. Required for normal organization of the actin cytoskeleton. Plays a role in the biogenesis of polarized columnar-shaped epithelium by maintaining polyglutamylated microtubules, thus facilitating efficient vesicle transport, and by impeding MAP4 binding to tubulin. Required for the progression through mitosis. Forms a scaffold at the midplane of the mitotic splindle required to maintain CENPE localization at kinetochores and consequently chromosome congression. During anaphase, may be required for chromosome segregation and spindle elongation. Plays a role in ciliogenesis and collective cell movements. In cilia, required for the integrity of the diffusion barrier at the base of the primary cilium that prevents diffusion of transmembrane proteins between the cilia and plasma membranes. This Gallus gallus (Chicken) protein is Septin-2.